Here is a 163-residue protein sequence, read N- to C-terminus: Nucleotide-binding protein BPUM_1028 (163 aa).

This sequence belongs to the YajQ family.

Its function is as follows. Nucleotide-binding protein. This chain is Nucleotide-binding protein BPUM_1028, found in Bacillus pumilus (strain SAFR-032).